We begin with the raw amino-acid sequence, 216 residues long: uncharacterized protein (216 aa).

Residues 5-25 traverse the membrane as a helical segment; the sequence is YVKALVAVTVALGVLLPSTIS. Composition is skewed to low complexity over residues 28-67 and 89-108; these read KSFS…SSSS and KASS…ATSK. The segment at 28 to 115 is disordered; it reads KSFSGRSSSS…TSKVTGKTYS (88 aa). 2 consecutive transmembrane segments (helical) span residues 137–157 and 183–203; these read GFAP…MFMI and IAWI…IALI.

It is found in the cell membrane. This is an uncharacterized protein from Bacillus subtilis (strain 168).